Here is a 268-residue protein sequence, read N- to C-terminus: Small ribosomal subunit protein eS1 (268 aa).

The interval Met1–Val21 is disordered.

Belongs to the eukaryotic ribosomal protein eS1 family. As to quaternary structure, component of the small ribosomal subunit. Mature ribosomes consist of a small (40S) and a large (60S) subunit. The 40S subunit contains about 33 different proteins and 1 molecule of RNA (18S). The 60S subunit contains about 49 different proteins and 3 molecules of RNA (28S, 5.8S and 5S).

The protein localises to the cytoplasm. Its function is as follows. Essential for oogenesis; required for late follicle cell development. This chain is Small ribosomal subunit protein eS1, found in Drosophila persimilis (Fruit fly).